The chain runs to 230 residues: Methyltransferase aurB (230 aa).

The protein belongs to the methyltransferase superfamily.

The protein operates within polyketide biosynthesis. Methyltransferase; part of the gene cluster that mediates the biosynthesis of aurovertins, fungal polyketides that exhibit potent inhibition of adenosine triphosphate synthase. Tha biosynthesis starts with the HR-PKS aurA that selects propionate as the starter unit; synthesizes a hexa-ene chain through the repeated functions of the KR and DH domains in the first six iterations; selectively introduces three alpha-methyl substitutions at C4, C6, and C16 using the S-adensylmethionine-dependent cMET; and shuts off KR and DH in the last three iterations to afford a 1,3,5-triketo portion that can undergo intramolecular cyclization to yield the alpha-pyrone intermediate. AurE may act as a cyclase and enhances the rate of pyrone formation and product release of aurA. The methyltransferase aurB then methylates the C17 hydroxyl group. C17 methylation is required to initiate epoxidation by the downstream monooxygenase aurC. The monooxygenase aurC and the epoxide hydrolase aurD can iteratively transform the terminal triene portion of the methylated precursor into the dioxabicyclo[3.2.1]octane scaffold of aurovertin E. Epoxidation modifications of the precursor occur in two separate steps; bis-epoxidation of the two terminal olefins takes place first, followed by another epoxidation that occurs at C7-C8 after tetrahydrofuran formation. The O-acyltransferase aurG converts aurovertin E to aurovertin A. In Calcarisporium arbuscula (Dendryphion arbuscula), this protein is Methyltransferase aurB.